The following is a 428-amino-acid chain: Chaperone SurA (428 aa).

The N-terminal stretch at 1-20 (MKNWKTLLLGIAMIANTSFA) is a signal peptide. PpiC domains lie at 171-272 (STEL…KVND) and 282-382 (VTEV…ELLD).

The protein resides in the periplasm. It carries out the reaction [protein]-peptidylproline (omega=180) = [protein]-peptidylproline (omega=0). Chaperone involved in the correct folding and assembly of outer membrane proteins. Recognizes specific patterns of aromatic residues and the orientation of their side chains, which are found more frequently in integral outer membrane proteins. May act in both early periplasmic and late outer membrane-associated steps of protein maturation. This chain is Chaperone SurA, found in Escherichia coli O157:H7.